A 265-amino-acid chain; its full sequence is Osteoclast-associated immunoglobulin-like receptor (265 aa).

Positions 1–18 are cleaved as a signal peptide; sequence MVLSLILQLSTLWPACRA. The Extracellular segment spans residues 19–231; that stretch reads DFTPTAPLAS…LDYTQGNLIR (213 aa). 2 Ig-like domains span residues 22 to 115 and 125 to 218; these read PTAP…SQPS and QLPR…SFEG. N-linked (GlcNAc...) asparagine glycosylation occurs at N47. C52 and C99 are disulfide-bonded. N-linked (GlcNAc...) asparagine glycosylation occurs at N144. A helical transmembrane segment spans residues 232 to 248; sequence LGLAGMVLICLGIIVTC. At 249-265 the chain is on the cytoplasmic side; it reads DWHSRSSAFDGLLPQQN.

This sequence belongs to the leukocyte receptor complex/polymeric immunoglobulin receptor (PIR/LRC) family. Specifically expressed in preosteoclasts or mature osteoclasts.

It is found in the cell membrane. Functionally, regulator of osteoclastogenesis which plays an important bone-specific function in osteoclast differentiation. In Mus musculus (Mouse), this protein is Osteoclast-associated immunoglobulin-like receptor (Oscar).